Here is a 585-residue protein sequence, read N- to C-terminus: Eukaryotic translation initiation factor 2A (585 aa).

M1 carries the N-acetylmethionine modification. A2 is subject to N-acetylalanine; in Eukaryotic translation initiation factor 2A, N-terminally processed. Phosphothreonine is present on T5. WD repeat units follow at residues 56–100 (GEKV…TTSK), 101–159 (DGTA…NNFN), 160–210 (TIAN…AGPH), 211–264 (AALA…TNGE), 265–306 (SAVV…NLKC), 307–348 (DPVF…DVKN), and 349–391 (YKLI…KIWH). The interval 434-534 (EVPNEEPKVA…QSISGDPEID (101 aa)) is disordered. Residues 494–507 (KKAAKQEARSDKSP) show a composition bias toward basic and acidic residues. 3 positions are modified to phosphoserine: S503, S506, and S517. Positions 517–528 (STPRNTVSQSIS) are enriched in polar residues. Phosphothreonine is present on T518. A Phosphoserine modification is found at S526. The stretch at 531-582 (PEIDKKIKNLKKKLKAIEQLKEQAATGKQLEKNQLEKIQKETALLQELEDLE) forms a coiled coil.

This sequence belongs to the WD repeat EIF2A family. In terms of tissue distribution, widely expressed. Expressed at higher level in pancreas, heart, brain and placenta.

Functions in the early steps of protein synthesis of a small number of specific mRNAs. Acts by directing the binding of methionyl-tRNAi to 40S ribosomal subunits. In contrast to the eIF-2 complex, it binds methionyl-tRNAi to 40S subunits in a codon-dependent manner, whereas the eIF-2 complex binds methionyl-tRNAi to 40S subunits in a GTP-dependent manner. This chain is Eukaryotic translation initiation factor 2A (EIF2A), found in Homo sapiens (Human).